Consider the following 260-residue polypeptide: Thiazole synthase (260 aa).

Lysine 96 acts as the Schiff-base intermediate with DXP in catalysis. 1-deoxy-D-xylulose 5-phosphate is bound by residues glycine 157, 183–184 (AG), and 205–206 (AS).

It belongs to the ThiG family. In terms of assembly, homotetramer. Forms heterodimers with either ThiH or ThiS.

The protein resides in the cytoplasm. It carries out the reaction [ThiS sulfur-carrier protein]-C-terminal-Gly-aminoethanethioate + 2-iminoacetate + 1-deoxy-D-xylulose 5-phosphate = [ThiS sulfur-carrier protein]-C-terminal Gly-Gly + 2-[(2R,5Z)-2-carboxy-4-methylthiazol-5(2H)-ylidene]ethyl phosphate + 2 H2O + H(+). Its pathway is cofactor biosynthesis; thiamine diphosphate biosynthesis. In terms of biological role, catalyzes the rearrangement of 1-deoxy-D-xylulose 5-phosphate (DXP) to produce the thiazole phosphate moiety of thiamine. Sulfur is provided by the thiocarboxylate moiety of the carrier protein ThiS. In vitro, sulfur can be provided by H(2)S. In Corynebacterium glutamicum (strain R), this protein is Thiazole synthase.